Reading from the N-terminus, the 3977-residue chain is Hybrid PKS-NRPS synthetase gkaA (3977 aa).

Residues 4-441 (EEPIAVIGSG…GTNAHVILEN (438 aa)) enclose the Ketosynthase family 3 (KS3) domain. Active-site for beta-ketoacyl synthase activity residues include Cys-177, His-316, and His-361. In terms of domain architecture, Malonyl-CoA:ACP transacylase (MAT) spans 551 to 867 (VFTGQGAQWP…TGVIHRGKND (317 aa)). Residues 937-1072 (NPLLGTRTTD…GRITVTLGES (136 aa)) form an N-terminal hotdog fold region. Residues 937–1241 (NPLLGTRTTD…VVAFSEATAD (305 aa)) form the PKS/mFAS DH domain. His-969 functions as the Proton acceptor; for dehydratase activity in the catalytic mechanism. The segment at 1087-1241 (LVSIPQDRFY…VVAFSEATAD (155 aa)) is C-terminal hotdog fold. The Proton donor; for dehydratase activity role is filled by Asp-1147. The methyltransferase (cMeT) domain stretch occupies residues 1286 to 1580 (YMKKTVEEFP…FSGIDSSTPE (295 aa)). Residues 2128–2301 (TYVLFGLTSD…AASILHIGAV (174 aa)) enclose the Ketoreductase (KR) domain. In terms of domain architecture, Carrier 1 spans 2409–2490 (SEVFEIISGA…QLLEYAIDNM (82 aa)). Ser-2450 carries the post-translational modification O-(pantetheine 4'-phosphoryl)serine. A disordered region spans residues 2497–2542 (HSNGEQGTVSDSGSTNIQLTPASTPSVPSVNLASDSTGSSQVGEDV). The segment covering 2499–2538 (NGEQGTVSDSGSTNIQLTPASTPSVPSVNLASDSTGSSQV) has biased composition (polar residues). Residues 2584-3018 (EKIIPMSPGQ…LKDISLFSKE (435 aa)) are condensation. The segment at 3048 to 3437 (IAEHPDTISI…GALEILGRID (390 aa)) is adenylation. A Carrier 2 domain is found at 3552 to 3632 (FSLTPTEDKL…AMASLITPAS (81 aa)). Ser-3592 is subject to O-(pantetheine 4'-phosphoryl)serine. The Thioester reductase (TE) domain maps to 3672–3890 (LTGATGFLGH…FVDLVSVQNV (219 aa)).

This sequence in the C-terminal section; belongs to the NRP synthetase family. Pantetheine 4'-phosphate is required as a cofactor.

It participates in mycotoxin biosynthesis. In terms of biological role, hybrid PKS-NRPS synthetase; part of the gene cluster that mediates the biosynthesis of GKK1032, fungal natural products containing a macrocyclic para-cyclophane connected to a decahydrofluorene ring system that show potent antitumor activities. Within the pathway, the PKS-NRPS gkaA, with the help of the trans-enoyl reductase gkaC, synthesize the polyketide-tyrosyl acyl thioester product which can be reductively off-loaded by the terminal reductase (R) domain in gkaA. The PKS module of gkaA acts in combination with the trans-acting enoyl reductase gkaC to produce a methylated polyketide attached to the ACP domain. In parallel, the adenylation (A) domain of the NRPS module activated L-tyrosine, which is then transferred to the ACP domain. The condensation (C) domain subsequently links this group to the polyketide chain, forming an enzyme-bound amide. The alpha/beta hydrolase gkaG is then required to catalyze the subsequent Knoevenagel condensation that affords the 3-pyrrolin-2-one ring, whereas the three proteins gkaB, gkadX and gkaZ then function synergistically to form the cyclophane. The protein is Hybrid PKS-NRPS synthetase gkaA of Penicillium citrinum.